We begin with the raw amino-acid sequence, 160 residues long: Cytochrome b6-f complex subunit 4 (160 aa).

Helical transmembrane passes span 36–56 (LLYIFPVVILGTIACNVGLAV), 95–115 (LLGVLLMVSVPTGLLTVPFLE), and 131–151 (TVFLIGTAVALWLGIGATLPI).

The protein belongs to the cytochrome b family. PetD subfamily. In terms of assembly, the 4 large subunits of the cytochrome b6-f complex are cytochrome b6, subunit IV (17 kDa polypeptide, petD), cytochrome f and the Rieske protein, while the 4 small subunits are petG, petL, petM and petN. The complex functions as a dimer.

The protein resides in the plastid. Its subcellular location is the chloroplast thylakoid membrane. Component of the cytochrome b6-f complex, which mediates electron transfer between photosystem II (PSII) and photosystem I (PSI), cyclic electron flow around PSI, and state transitions. The chain is Cytochrome b6-f complex subunit 4 from Saccharum hybrid (Sugarcane).